A 201-amino-acid polypeptide reads, in one-letter code: Holliday junction branch migration complex subunit RuvA (201 aa).

The interval 1 to 63 is domain I; the sequence is MYAYIKGKLS…EDAQLLYGFM (63 aa). The segment at 64–142 is domain II; the sequence is SEEEKGMFLS…ITEENPETLL (79 aa). The interval 143 to 153 is flexible linker; that stretch reads NFEGSESNQTS. The segment at 153–201 is domain III; the sequence is SPILDEALLALEALGYSKRELNKVEKKLQAESYTSVDEAVKAGLKILVS.

The protein belongs to the RuvA family. As to quaternary structure, homotetramer. Forms an RuvA(8)-RuvB(12)-Holliday junction (HJ) complex. HJ DNA is sandwiched between 2 RuvA tetramers; dsDNA enters through RuvA and exits via RuvB. An RuvB hexamer assembles on each DNA strand where it exits the tetramer. Each RuvB hexamer is contacted by two RuvA subunits (via domain III) on 2 adjacent RuvB subunits; this complex drives branch migration. In the full resolvosome a probable DNA-RuvA(4)-RuvB(12)-RuvC(2) complex forms which resolves the HJ.

It localises to the cytoplasm. The RuvA-RuvB-RuvC complex processes Holliday junction (HJ) DNA during genetic recombination and DNA repair, while the RuvA-RuvB complex plays an important role in the rescue of blocked DNA replication forks via replication fork reversal (RFR). RuvA specifically binds to HJ cruciform DNA, conferring on it an open structure. The RuvB hexamer acts as an ATP-dependent pump, pulling dsDNA into and through the RuvAB complex. HJ branch migration allows RuvC to scan DNA until it finds its consensus sequence, where it cleaves and resolves the cruciform DNA. The polypeptide is Holliday junction branch migration complex subunit RuvA (Staphylococcus carnosus (strain TM300)).